Reading from the N-terminus, the 227-residue chain is MNIKSFLNNRLWKNNSSLVQLLGLCPVLAMTTNAINAIGLGMTTTLVLTITNTIISSFRKIIPKDLRIPIYMMIISSVVTSIEMLLHAYTFNLYQSLGIFIPLIVTNCIIVGRADLIAYKSSIVESFFDGIFIGLGSMFAMFAVGSIREILGNGTLFFGANKIISNIHSSVFFTLLDKKFTIILAVFPPGGFLILGFLIAIKNFIDLYYKKNTIKNIEQCSCSNKIK.

5 helical membrane passes run Ala-34–Ser-56, Ile-68–Ala-88, Phe-91–Val-111, Phe-127–Ile-147, and Thr-181–Ile-201.

Belongs to the NqrDE/RnfAE family. The complex is composed of six subunits: RnfA, RnfB, RnfC, RnfD, RnfE and RnfG.

Its subcellular location is the cell inner membrane. Its function is as follows. Part of a membrane-bound complex that couples electron transfer with translocation of ions across the membrane. The sequence is that of Ion-translocating oxidoreductase complex subunit E from Buchnera aphidicola subsp. Acyrthosiphon pisum (strain APS) (Acyrthosiphon pisum symbiotic bacterium).